A 423-amino-acid polypeptide reads, in one-letter code: MSFNIWWLILYFSIVCQAKAHYSLRDFKANIFQVKYQWKYFDYNFGSDEKRQAAIQSGEYNYKNNVPIDVDRWNGKTFVTILRNDGVPSSLNVISNKIGNGGPLLEPYPNWSWAKNQNCSGITSVYRIAIDEWDRLWVLDNGISGETSVCPSQIVVFDLKNSKLLKQVKIPHDIAINSTTGKRNVVTPIVQSFDYNNTWVYIADVEGYALIIYNNADDSFQRLTSSTFVYDPRYTKYTINDESFSLQDGILGMALSHKTQNLYYSAMSSHNLNYVNTKQFTQGKFQANDIQYQGASDILWTQASAKAISETGALFFGLVSDTALGCWNENRPLKRRNIEIVAKNNDTLQFISGIKIIKQISSNIYERQNNEYIWIVSNKYQKIANGDLNFNEVNFRILNAPVNQLIRYTRCENPKTNFFSIFL.

The signal sequence occupies residues 1-20; it reads MSFNIWWLILYFSIVCQAKA. N-linked (GlcNAc...) asparagine glycans are attached at residues N110, N118, N177, N196, and N345.

This sequence belongs to the major royal jelly protein family. As to expression, expressed at very low levels in the hypopharyngeal glands of adult worker bees (at protein level); expression peaks at 12 days post eclosion. Secreted into bee venom in the sting apparatus (at protein level). Expressed in the brains of adult worker bees peaking at 12 days post eclosion (at protein level). Expressed in the spermatheca of adult queen bees (at protein level); expression levels are higher in mated queens than in virgin queens. Along with Mrjp8 expressed at very low levels in the head of worker bees compared to other major royal jelly proteins.

The protein resides in the secreted. Component of bee sting venom. Component of royal jelly, a substance produced in the hypopharyngeal gland containing proteins, free amino acids, fatty acids, sugars and other nutrients, which is fed to developing larvae by worker nurse bees; may be present only at trace levels. All larvae are fed some royal jelly (also known as worker jelly) early in their development but it forms the principal source of nutrition for larvae destined to become queen bees. Produced in the spermatheca of adult queen bees, along with other major royal jelly proteins, where it may act as a nutrient supply for sperm stored by mated queens, or be involved in energy metabolism. The sequence is that of Major royal jelly protein 9 from Apis mellifera (Honeybee).